The primary structure comprises 234 residues: MKDEIFKKPLEKQFEFDANVASVFDDMVARSVPFYAQNLKLITQLITHFAPQNAKICDLGCSTASLLLALFEKRKDLQLSGVDNAKAMLDIARNKTSAFGARVDFYEQNLDEFSFFKNDVFVATYTMQFIRPPKRQEIIDKIYQNLNDGGIFIMSEKILYEDVKISKKMIEIYENYKQDQGYSKLEIATKREALENILIPYTQNENINMLKNSGFKIIESVFKWVNFETFVAFK.

S-adenosyl-L-methionine is bound by residues tyrosine 35, glycine 60–serine 62, aspartate 83–asparagine 84, and arginine 191.

Belongs to the class I-like SAM-binding methyltransferase superfamily. Cx-SAM synthase family. As to quaternary structure, homodimer.

It catalyses the reaction prephenate + S-adenosyl-L-methionine = carboxy-S-adenosyl-L-methionine + 3-phenylpyruvate + H2O. Catalyzes the conversion of S-adenosyl-L-methionine (SAM) to carboxy-S-adenosyl-L-methionine (Cx-SAM). This Campylobacter lari (strain RM2100 / D67 / ATCC BAA-1060) protein is Carboxy-S-adenosyl-L-methionine synthase.